Reading from the N-terminus, the 440-residue chain is 3-phosphoshikimate 1-carboxyvinyltransferase (440 aa).

Residues lysine 25, serine 26, and arginine 30 each coordinate 3-phosphoshikimate. Lysine 25 lines the phosphoenolpyruvate pocket. Residues glycine 96 and arginine 124 each coordinate phosphoenolpyruvate. 3-phosphoshikimate-binding residues include serine 168, glutamine 169, aspartate 310, and lysine 337. Position 169 (glutamine 169) interacts with phosphoenolpyruvate. The active-site Proton acceptor is the aspartate 310. Arginine 341, arginine 382, and lysine 409 together coordinate phosphoenolpyruvate.

This sequence belongs to the EPSP synthase family. Monomer.

Its subcellular location is the cytoplasm. It catalyses the reaction 3-phosphoshikimate + phosphoenolpyruvate = 5-O-(1-carboxyvinyl)-3-phosphoshikimate + phosphate. It functions in the pathway metabolic intermediate biosynthesis; chorismate biosynthesis; chorismate from D-erythrose 4-phosphate and phosphoenolpyruvate: step 6/7. Catalyzes the transfer of the enolpyruvyl moiety of phosphoenolpyruvate (PEP) to the 5-hydroxyl of shikimate-3-phosphate (S3P) to produce enolpyruvyl shikimate-3-phosphate and inorganic phosphate. This is 3-phosphoshikimate 1-carboxyvinyltransferase from Chlamydia trachomatis serovar D (strain ATCC VR-885 / DSM 19411 / UW-3/Cx).